A 427-amino-acid chain; its full sequence is MDSVNIARRPTRLVRVGHVLVGSDAPVMVQSMTNTDTADAAGTAEQVYQLAQAGSEVVRITVNSPEAAARVAEIRQRLDDLGCDVPLVGDFHFNGDRLLKEFPDCARALAKYRINPGNVGKGAKGDDKFAFMIRTAMEHDKAVRIGVNWGSLDQALLARMMDANNRAANPLPLPKLMQEALIVSALESAEKAVEIGLSPDNIILSCKVSNVQDLISVYRELGGRCDYPLHLGLTEAGMGSKGIVASSAALAVLLQEGIGDTIRISLTPQPGEARTKEVVVAQELLQTMGLRSFTPLVTACPGCGRTTSTFFQELADHIQSYLRERMPVWRLQYPGVEDMKVAVMGCVVNGPGESKLADIGISLPGTGEVPVAPVYVDGQKDVTLKGDNIPAEFTAIVDNYVKTRYGEGGAKRREVASRTIPIRPVKA.

4 residues coordinate [4Fe-4S] cluster: cysteine 300, cysteine 303, cysteine 346, and glutamate 353.

The protein belongs to the IspG family. [4Fe-4S] cluster is required as a cofactor.

The catalysed reaction is (2E)-4-hydroxy-3-methylbut-2-enyl diphosphate + oxidized [flavodoxin] + H2O + 2 H(+) = 2-C-methyl-D-erythritol 2,4-cyclic diphosphate + reduced [flavodoxin]. The protein operates within isoprenoid biosynthesis; isopentenyl diphosphate biosynthesis via DXP pathway; isopentenyl diphosphate from 1-deoxy-D-xylulose 5-phosphate: step 5/6. Converts 2C-methyl-D-erythritol 2,4-cyclodiphosphate (ME-2,4cPP) into 1-hydroxy-2-methyl-2-(E)-butenyl 4-diphosphate. This is 4-hydroxy-3-methylbut-2-en-1-yl diphosphate synthase (flavodoxin) from Chromobacterium violaceum (strain ATCC 12472 / DSM 30191 / JCM 1249 / CCUG 213 / NBRC 12614 / NCIMB 9131 / NCTC 9757 / MK).